The following is a 190-amino-acid chain: Major sperm protein 32 (190 aa).

In terms of domain architecture, MSP spans 72 to 189 (MIQTQPGTKI…RRKNLPIEYN (118 aa)).

Sperm.

It localises to the cell projection. It is found in the pseudopodium. The protein resides in the cytoplasm. Its subcellular location is the cytoskeleton. Functionally, central component in molecular interactions underlying sperm crawling. Forms an extensive filament system that extends from sperm villipoda, along the leading edge of the pseudopod. The protein is Major sperm protein 32 (msp-32) of Caenorhabditis elegans.